Consider the following 166-residue polypeptide: Probable histone deacetylase complex subunit SAP18 (166 aa).

The interval 143–166 is disordered; that stretch reads GRRFNNREQGDRFDHRQRQRSPIR. The segment covering 147-158 has biased composition (basic and acidic residues); that stretch reads NNREQGDRFDHR.

It belongs to the SAP18 family. In terms of assembly, interacts with SIN3 and histone deacetylase.

Functionally, acts in transcription repression. Involved in the tethering of the SIN3 complex to core histone proteins. The protein is Probable histone deacetylase complex subunit SAP18 of Caenorhabditis elegans.